A 253-amino-acid chain; its full sequence is Aspartate/glutamate leucyltransferase (253 aa).

The protein belongs to the R-transferase family. Bpt subfamily.

It localises to the cytoplasm. The catalysed reaction is N-terminal L-glutamyl-[protein] + L-leucyl-tRNA(Leu) = N-terminal L-leucyl-L-glutamyl-[protein] + tRNA(Leu) + H(+). It carries out the reaction N-terminal L-aspartyl-[protein] + L-leucyl-tRNA(Leu) = N-terminal L-leucyl-L-aspartyl-[protein] + tRNA(Leu) + H(+). Functions in the N-end rule pathway of protein degradation where it conjugates Leu from its aminoacyl-tRNA to the N-termini of proteins containing an N-terminal aspartate or glutamate. This chain is Aspartate/glutamate leucyltransferase, found in Allorhizobium ampelinum (strain ATCC BAA-846 / DSM 112012 / S4) (Agrobacterium vitis (strain S4)).